The sequence spans 461 residues: Photosystem II CP43 reaction center protein (461 aa).

A propeptide spanning residues 1–2 (ME) is cleaved from the precursor. N-acetylthreonine is present on Thr3. Phosphothreonine is present on Thr3. 5 helical membrane-spanning segments follow: residues 57–81 (LFEV…PHLA), 122–143 (LLGP…KDRN), 166–188 (KALY…RKIT), 243–263 (KPFA…LSYS), and 279–300 (WFNN…ASQA). A [CaMn4O5] cluster-binding site is contributed by Glu355. Residues 435 to 459 (RARAAAAGFEKGIDRDFEPVLSMTP) traverse the membrane as a helical segment.

It belongs to the PsbB/PsbC family. PsbC subfamily. PSII is composed of 1 copy each of membrane proteins PsbA, PsbB, PsbC, PsbD, PsbE, PsbF, PsbH, PsbI, PsbJ, PsbK, PsbL, PsbM, PsbT, PsbX, PsbY, PsbZ, Psb30/Ycf12, at least 3 peripheral proteins of the oxygen-evolving complex and a large number of cofactors. It forms dimeric complexes. Binds multiple chlorophylls and provides some of the ligands for the Ca-4Mn-5O cluster of the oxygen-evolving complex. It may also provide a ligand for a Cl- that is required for oxygen evolution. PSII binds additional chlorophylls, carotenoids and specific lipids. serves as cofactor.

Its subcellular location is the plastid. The protein localises to the chloroplast thylakoid membrane. One of the components of the core complex of photosystem II (PSII). It binds chlorophyll and helps catalyze the primary light-induced photochemical processes of PSII. PSII is a light-driven water:plastoquinone oxidoreductase, using light energy to abstract electrons from H(2)O, generating O(2) and a proton gradient subsequently used for ATP formation. This Nicotiana sylvestris (Wood tobacco) protein is Photosystem II CP43 reaction center protein.